The following is a 214-amino-acid chain: MKLQNSQLQPQARYILPSFIEHSSFGVKESNPYNKLFEERIIFLGVQVDDASANDIMAQLLVLESLDPDRDITMYINSPGGGFTSLMAIYDTMQYVRADIQTVCLGQAASAAAVLLAAGTPGKRMALPNARVLIHQPSLAGVIQGQFSDLEIQAAEIERMRTLMETTLSRHTGKDAAVIRKDTDRDKILTAEEAKDYGIIDTVLEYRKLSAQTV.

Ser-110 functions as the Nucleophile in the catalytic mechanism. His-135 is an active-site residue.

Belongs to the peptidase S14 family. In terms of assembly, fourteen ClpP subunits assemble into 2 heptameric rings which stack back to back to give a disk-like structure with a central cavity, resembling the structure of eukaryotic proteasomes.

The protein localises to the cytoplasm. It carries out the reaction Hydrolysis of proteins to small peptides in the presence of ATP and magnesium. alpha-casein is the usual test substrate. In the absence of ATP, only oligopeptides shorter than five residues are hydrolyzed (such as succinyl-Leu-Tyr-|-NHMec, and Leu-Tyr-Leu-|-Tyr-Trp, in which cleavage of the -Tyr-|-Leu- and -Tyr-|-Trp bonds also occurs).. In terms of biological role, cleaves peptides in various proteins in a process that requires ATP hydrolysis. Has a chymotrypsin-like activity. Plays a major role in the degradation of misfolded proteins. The sequence is that of ATP-dependent Clp protease proteolytic subunit 2 from Mycobacterium leprae (strain TN).